The sequence spans 405 residues: MSISKYSIRFLSDKATRFVPKSGVYPKGYAVGGIHCGVKKDGKSLDLAILQNTFNKEASTAGVFTQNKFKAAPVQVSMRILKQKSGSGINSFVINSGNANAVTGSKGMKDAEEMVTVTDSVLENPKDSTLVMSTGVIGNNLPIDNILTGIPKLSLNHLGNTHQHWIDCATAICTTDTFPKLVTKQFNLGNDTYTLAGLCKGAGMICPNMATLLGFFVTDAPVSPNALQQILRYAVDRSFNSITVDGDMSTNDTIVAMANGAAGGELIDNTSSSAERFSALQTEIVDFAQQLAQLVVRDGEGATKFITLKVNDALSYKDAKSIASSIANSSLFKTAMYGKDANWGRILCAIGYADVSTDQSVIPNKTSVKFVPVDGSEPIKIIWLMVNSKKLTKIELQKYYKMKIW.

Residues Thr174, Lys200, Thr211, and Glu300 each coordinate substrate. The Nucleophile role is filled by Thr211.

This sequence belongs to the ArgJ family. In terms of assembly, heterodimer of an alpha and a beta chain. Post-translationally, the alpha and beta chains are autoproteolytically processed from a single precursor protein within the mitochondrion.

The protein resides in the mitochondrion matrix. It carries out the reaction N(2)-acetyl-L-ornithine + L-glutamate = N-acetyl-L-glutamate + L-ornithine. The catalysed reaction is L-glutamate + acetyl-CoA = N-acetyl-L-glutamate + CoA + H(+). It functions in the pathway amino-acid biosynthesis; L-arginine biosynthesis; L-ornithine and N-acetyl-L-glutamate from L-glutamate and N(2)-acetyl-L-ornithine (cyclic): step 1/1. Its pathway is amino-acid biosynthesis; L-arginine biosynthesis; N(2)-acetyl-L-ornithine from L-glutamate: step 1/4. In terms of biological role, catalyzes two activities which are involved in the cyclic version of arginine biosynthesis: the synthesis of acetylglutamate from glutamate and acetyl-CoA, and of ornithine by transacetylation between acetylornithine and glutamate. In Candida tropicalis (strain ATCC MYA-3404 / T1) (Yeast), this protein is Arginine biosynthesis bifunctional protein ArgJ, mitochondrial.